A 96-amino-acid chain; its full sequence is Exopolysaccharide production repressor protein (96 aa).

The next 2 membrane-spanning stretches (helical) occupy residues 6 to 26 and 35 to 55; these read FVVS…FLTG and TLLC…FLVW. The disordered stretch occupies residues 64 to 96; the sequence is LSPGQLPADPTNDEKQTGKLSLRRLNRPPHFNS.

Its subcellular location is the cell membrane. Its pathway is glycan metabolism; exopolysaccharide biosynthesis. Its function is as follows. Inhibition of exopolysaccharide synthesis (EPS) and nodulation ability (NOD). This chain is Exopolysaccharide production repressor protein (exoX), found in Sinorhizobium fredii (strain NBRC 101917 / NGR234).